The primary structure comprises 157 residues: SsrA-binding protein (157 aa).

The segment at 132-157 is disordered; sequence KLHDKRETEKKRDWSREKGRLLRSRG. The segment covering 135–151 has biased composition (basic and acidic residues); that stretch reads DKRETEKKRDWSREKGR.

This sequence belongs to the SmpB family.

It localises to the cytoplasm. Its function is as follows. Required for rescue of stalled ribosomes mediated by trans-translation. Binds to transfer-messenger RNA (tmRNA), required for stable association of tmRNA with ribosomes. tmRNA and SmpB together mimic tRNA shape, replacing the anticodon stem-loop with SmpB. tmRNA is encoded by the ssrA gene; the 2 termini fold to resemble tRNA(Ala) and it encodes a 'tag peptide', a short internal open reading frame. During trans-translation Ala-aminoacylated tmRNA acts like a tRNA, entering the A-site of stalled ribosomes, displacing the stalled mRNA. The ribosome then switches to translate the ORF on the tmRNA; the nascent peptide is terminated with the 'tag peptide' encoded by the tmRNA and targeted for degradation. The ribosome is freed to recommence translation, which seems to be the essential function of trans-translation. This chain is SsrA-binding protein, found in Rhodopseudomonas palustris (strain ATCC BAA-98 / CGA009).